A 396-amino-acid polypeptide reads, in one-letter code: Ribosomal RNA large subunit methyltransferase G (396 aa).

Belongs to the methyltransferase superfamily. RlmG family.

The protein resides in the cytoplasm. It carries out the reaction guanosine(1835) in 23S rRNA + S-adenosyl-L-methionine = N(2)-methylguanosine(1835) in 23S rRNA + S-adenosyl-L-homocysteine + H(+). Specifically methylates the guanine in position 1835 (m2G1835) of 23S rRNA. The polypeptide is Ribosomal RNA large subunit methyltransferase G (Yersinia enterocolitica serotype O:8 / biotype 1B (strain NCTC 13174 / 8081)).